The chain runs to 82 residues: Proline, histidine and glycine-rich protein 1 (82 aa).

Residues H20–H82 form a disordered region.

This Homo sapiens (Human) protein is Proline, histidine and glycine-rich protein 1 (PHGR1).